We begin with the raw amino-acid sequence, 154 residues long: Iron sulfur cluster assembly protein 1, mitochondrial (154 aa).

Belongs to the NifU family. Component of the core Fe-S cluster (ISC) assembly machinery. [2Fe-2S] cluster is required as a cofactor.

It localises to the mitochondrion matrix. It participates in cofactor biosynthesis; iron-sulfur cluster biosynthesis. In terms of biological role, scaffold protein for the de novo synthesis of iron-sulfur (Fe-S) clusters within mitochondria, which is required for maturation of both mitochondrial and cytoplasmic [2Fe-2S] and [4Fe-4S] proteins. First, a [2Fe-2S] cluster is transiently assembled on the scaffold protein ISU1. In a second step, the cluster is released from ISU1, transferred to a glutaredoxin, followed by the formation of mitochondrial [2Fe-2S] proteins, the synthesis of [4Fe-4S] clusters and their target-specific insertion into the recipient apoproteins. Cluster assembly on ISU1 depends on the function of the cysteine desulfurase complex NFS1-ISD11, which serves as the sulfur donor for cluster synthesis, the iron-binding protein frataxin as the putative iron donor, and the electron transfer chain comprised of ferredoxin reductase and ferredoxin, which receive their electrons from NADH. This chain is Iron sulfur cluster assembly protein 1, mitochondrial (ISU1), found in Eremothecium gossypii (strain ATCC 10895 / CBS 109.51 / FGSC 9923 / NRRL Y-1056) (Yeast).